The chain runs to 256 residues: Alcohol dehydrogenase (256 aa).

Residue 12–41 coordinates NAD(+); that stretch reads FVAGLGGIGLDTTKELLKRDLKNLVILDRI. Serine 140 contacts substrate. Tyrosine 153 serves as the catalytic Proton acceptor.

This sequence belongs to the short-chain dehydrogenases/reductases (SDR) family. As to quaternary structure, homodimer.

The enzyme catalyses a primary alcohol + NAD(+) = an aldehyde + NADH + H(+). It catalyses the reaction a secondary alcohol + NAD(+) = a ketone + NADH + H(+). The chain is Alcohol dehydrogenase from Drosophila ananassae (Fruit fly).